A 282-amino-acid polypeptide reads, in one-letter code: MQEIFLCSISNVRSGDCKEDCAYCTQSSHHQGAIKRYKFKDEKVVLQEARALRQLGALGFCLVTSGRELDDEKCEYIAKLAKAINQEELGLHLIACCGRADLEQLEFLRDAGIHSYNHNLETSQNFFPKICSTHTWEERFITCENALRAGLGLCSGGIFGLNESWEDRIEMLRALASLSPHTTPINFFIKNPVLPIDAETLSADEALECVLLAKEFLPNARLMVAGGREVVFKDNDKKEAKLFEYGINAVVLGDYLTTKGKAPKKDIEKLLSYGLTMATSCH.

The region spanning 1–228 (MQEIFLCSIS…NARLMVAGGR (228 aa)) is the Radical SAM core domain. [4Fe-4S] cluster-binding residues include cysteine 17, cysteine 21, and cysteine 24. 4 residues coordinate [2Fe-2S] cluster: cysteine 61, cysteine 96, cysteine 154, and arginine 221.

Belongs to the radical SAM superfamily. Biotin synthase family. Homodimer. It depends on [4Fe-4S] cluster as a cofactor. The cofactor is [2Fe-2S] cluster.

The enzyme catalyses (4R,5S)-dethiobiotin + (sulfur carrier)-SH + 2 reduced [2Fe-2S]-[ferredoxin] + 2 S-adenosyl-L-methionine = (sulfur carrier)-H + biotin + 2 5'-deoxyadenosine + 2 L-methionine + 2 oxidized [2Fe-2S]-[ferredoxin]. Its pathway is cofactor biosynthesis; biotin biosynthesis; biotin from 7,8-diaminononanoate: step 2/2. In terms of biological role, catalyzes the conversion of dethiobiotin (DTB) to biotin by the insertion of a sulfur atom into dethiobiotin via a radical-based mechanism. This chain is Biotin synthase, found in Helicobacter pylori (strain ATCC 700392 / 26695) (Campylobacter pylori).